Consider the following 446-residue polypeptide: Methylenetetrahydrofolate--tRNA-(uracil-5-)-methyltransferase TrmFO (446 aa).

FAD is bound at residue 8–13 (GAGLAG).

It belongs to the MnmG family. TrmFO subfamily. The cofactor is FAD.

The protein localises to the cytoplasm. It catalyses the reaction uridine(54) in tRNA + (6R)-5,10-methylene-5,6,7,8-tetrahydrofolate + NADH + H(+) = 5-methyluridine(54) in tRNA + (6S)-5,6,7,8-tetrahydrofolate + NAD(+). The catalysed reaction is uridine(54) in tRNA + (6R)-5,10-methylene-5,6,7,8-tetrahydrofolate + NADPH + H(+) = 5-methyluridine(54) in tRNA + (6S)-5,6,7,8-tetrahydrofolate + NADP(+). In terms of biological role, catalyzes the folate-dependent formation of 5-methyl-uridine at position 54 (M-5-U54) in all tRNAs. This is Methylenetetrahydrofolate--tRNA-(uracil-5-)-methyltransferase TrmFO from Paracoccus denitrificans (strain Pd 1222).